A 352-amino-acid polypeptide reads, in one-letter code: Holliday junction branch migration complex subunit RuvB (352 aa).

Positions 4 to 191 (TDKLAAPARV…FGIVARLEFY (188 aa)) are large ATPase domain (RuvB-L). Residues Leu-30, Arg-31, Gly-72, Lys-75, Thr-76, Thr-77, 138 to 140 (EDY), Arg-181, Tyr-191, and Arg-228 each bind ATP. Thr-76 is a binding site for Mg(2+). A small ATPAse domain (RuvB-S) region spans residues 192–262 (TADELARIVT…MADAALAMLD (71 aa)). The head domain (RuvB-H) stretch occupies residues 265–352 (SVGFDLMDRK…SGASELFGDA (88 aa)). Arg-301, Arg-320, and Arg-325 together coordinate DNA.

The protein belongs to the RuvB family. Homohexamer. Forms an RuvA(8)-RuvB(12)-Holliday junction (HJ) complex. HJ DNA is sandwiched between 2 RuvA tetramers; dsDNA enters through RuvA and exits via RuvB. An RuvB hexamer assembles on each DNA strand where it exits the tetramer. Each RuvB hexamer is contacted by two RuvA subunits (via domain III) on 2 adjacent RuvB subunits; this complex drives branch migration. In the full resolvosome a probable DNA-RuvA(4)-RuvB(12)-RuvC(2) complex forms which resolves the HJ.

It is found in the cytoplasm. The catalysed reaction is ATP + H2O = ADP + phosphate + H(+). Its function is as follows. The RuvA-RuvB-RuvC complex processes Holliday junction (HJ) DNA during genetic recombination and DNA repair, while the RuvA-RuvB complex plays an important role in the rescue of blocked DNA replication forks via replication fork reversal (RFR). RuvA specifically binds to HJ cruciform DNA, conferring on it an open structure. The RuvB hexamer acts as an ATP-dependent pump, pulling dsDNA into and through the RuvAB complex. RuvB forms 2 homohexamers on either side of HJ DNA bound by 1 or 2 RuvA tetramers; 4 subunits per hexamer contact DNA at a time. Coordinated motions by a converter formed by DNA-disengaged RuvB subunits stimulates ATP hydrolysis and nucleotide exchange. Immobilization of the converter enables RuvB to convert the ATP-contained energy into a lever motion, pulling 2 nucleotides of DNA out of the RuvA tetramer per ATP hydrolyzed, thus driving DNA branch migration. The RuvB motors rotate together with the DNA substrate, which together with the progressing nucleotide cycle form the mechanistic basis for DNA recombination by continuous HJ branch migration. Branch migration allows RuvC to scan DNA until it finds its consensus sequence, where it cleaves and resolves cruciform DNA. In Cupriavidus necator (strain ATCC 17699 / DSM 428 / KCTC 22496 / NCIMB 10442 / H16 / Stanier 337) (Ralstonia eutropha), this protein is Holliday junction branch migration complex subunit RuvB.